A 1006-amino-acid polypeptide reads, in one-letter code: SAC3 family protein A (1006 aa).

Disordered stretches follow at residues 1-75 (MNHG…GPAT), 106-162 (TPYQ…PGSY), 183-239 (GYQS…TIAT), 266-326 (GTEK…AVST), 516-550 (TVTT…RWEP), 595-638 (GFKP…SDKD), and 650-690 (AGSA…GNLH). Composition is skewed to polar residues over residues 26–75 (GSQT…GPAT) and 106–115 (TPYQTSSDPH). The span at 116-140 (NYSNTGYSNYYSGYQQQPSQSYPQP) shows a compositional bias: low complexity. Positions 144-162 (YQNTGAPQPLSSFQNPGSY) are enriched in polar residues. 2 stretches are compositionally biased toward polar residues: residues 269–282 (KLST…SQSF) and 313–326 (SHPP…AVST). Positions 516 to 539 (TVTTTNVTNSESSSAQLSSLQNKS) are enriched in low complexity. Basic residues predominate over residues 609–618 (SFQRPVKRQR). Residues 653–680 (AEEKKRRDSRSKRFEKIQGHSRGNDLTK) show a composition bias toward basic and acidic residues. A PCI domain is found at 804 to 978 (DLPEYNQCLS…DMLLDTKATS (175 aa)).

This sequence belongs to the SAC3 family. In terms of assembly, interacts with EER5, SAC3B and CML20.

The protein resides in the nucleus. In terms of biological role, component of the TREX-2 complex (transcription and export complex 2), a muliprotein complex that functions in docking export-competent ribonucleoprotein particles (mRNPs) to the nuclear entrance of the nuclear pore complex (nuclear basket). TREX-2 participates in mRNA export and accurate chromatin positioning in the nucleus by tethering genes to the nuclear periphery. The chain is SAC3 family protein A from Arabidopsis thaliana (Mouse-ear cress).